The sequence spans 67 residues: ATP synthase F(0) complex subunit 8 (67 aa).

A helical transmembrane segment spans residues T8 to F24. K54 is subject to N6-acetyllysine; alternate. Residue K54 is modified to N6-succinyllysine; alternate. Residue K57 is modified to N6-acetyllysine.

This sequence belongs to the ATPase protein 8 family. Component of the ATP synthase complex composed at least of ATP5F1A/subunit alpha, ATP5F1B/subunit beta, ATP5MC1/subunit c (homooctomer), MT-ATP6/subunit a, MT-ATP8/subunit 8, ATP5ME/subunit e, ATP5MF/subunit f, ATP5MG/subunit g, ATP5MK/subunit k, ATP5MJ/subunit j, ATP5F1C/subunit gamma, ATP5F1D/subunit delta, ATP5F1E/subunit epsilon, ATP5PF/subunit F6, ATP5PB/subunit b, ATP5PD/subunit d, ATP5PO/subunit OSCP. ATP synthase complex consists of a soluble F(1) head domain (subunits alpha(3) and beta(3)) - the catalytic core - and a membrane F(0) domain - the membrane proton channel (subunits c, a, 8, e, f, g, k and j). These two domains are linked by a central stalk (subunits gamma, delta, and epsilon) rotating inside the F1 region and a stationary peripheral stalk (subunits F6, b, d, and OSCP). Interacts with PRICKLE3.

It is found in the mitochondrion membrane. Its function is as follows. Subunit 8, of the mitochondrial membrane ATP synthase complex (F(1)F(0) ATP synthase or Complex V) that produces ATP from ADP in the presence of a proton gradient across the membrane which is generated by electron transport complexes of the respiratory chain. ATP synthase complex consist of a soluble F(1) head domain - the catalytic core - and a membrane F(1) domain - the membrane proton channel. These two domains are linked by a central stalk rotating inside the F(1) region and a stationary peripheral stalk. During catalysis, ATP synthesis in the catalytic domain of F(1) is coupled via a rotary mechanism of the central stalk subunits to proton translocation. In vivo, can only synthesize ATP although its ATP hydrolase activity can be activated artificially in vitro. Part of the complex F(0) domain. The sequence is that of ATP synthase F(0) complex subunit 8 from Equus asinus (Donkey).